The chain runs to 362 residues: 3-dehydroquinate synthase (362 aa).

Residues 72-77, 106-110, 130-131, lysine 142, and lysine 151 contribute to the NAD(+) site; these read SGEQAK, GVVGD, and TT. Zn(2+) contacts are provided by glutamate 184, histidine 246, and histidine 263.

It belongs to the sugar phosphate cyclases superfamily. Dehydroquinate synthase family. NAD(+) serves as cofactor. Requires Co(2+) as cofactor. The cofactor is Zn(2+).

It localises to the cytoplasm. The catalysed reaction is 7-phospho-2-dehydro-3-deoxy-D-arabino-heptonate = 3-dehydroquinate + phosphate. The protein operates within metabolic intermediate biosynthesis; chorismate biosynthesis; chorismate from D-erythrose 4-phosphate and phosphoenolpyruvate: step 2/7. In terms of biological role, catalyzes the conversion of 3-deoxy-D-arabino-heptulosonate 7-phosphate (DAHP) to dehydroquinate (DHQ). The polypeptide is 3-dehydroquinate synthase (Bacillus subtilis (strain 168)).